The primary structure comprises 67 residues: Putative sodium channel alpha-toxin Acra7 (67 aa).

Residues 2 to 66 (RDGYIVKPTN…PIKDPNQDCT (65 aa)) form the LCN-type CS-alpha/beta domain. 4 disulfide bridges follow: cysteine 12-cysteine 65, cysteine 16-cysteine 37, cysteine 23-cysteine 47, and cysteine 27-cysteine 49. Position 67 (arginine 67) is a propeptide, removed by a carboxypeptidase.

This sequence belongs to the long (4 C-C) scorpion toxin superfamily. Sodium channel inhibitor family. Alpha subfamily. As to expression, expressed by the venom gland.

It is found in the secreted. Its function is as follows. Alpha toxins bind voltage-independently at site-3 of sodium channels (Nav) and inhibit the inactivation of the activated channels, thereby blocking neuronal transmission. The chain is Putative sodium channel alpha-toxin Acra7 from Androctonus crassicauda (Arabian fat-tailed scorpion).